We begin with the raw amino-acid sequence, 124 residues long: Small ribosomal subunit protein bS6 (124 aa).

The tract at residues K93–S124 is disordered. The segment covering T105–Q115 has biased composition (basic and acidic residues).

The protein belongs to the bacterial ribosomal protein bS6 family.

Its function is as follows. Binds together with bS18 to 16S ribosomal RNA. The chain is Small ribosomal subunit protein bS6 from Variovorax paradoxus (strain S110).